We begin with the raw amino-acid sequence, 268 residues long: Phosphatidylglycerol--prolipoprotein diacylglyceryl transferase (268 aa).

3 helical membrane-spanning segments follow: residues 16–36, 56–76, and 92–112; these read FITL…GIWL, IWLV…FNWG, and GIAI…FTYV. Arginine 136 provides a ligand contact to a 1,2-diacyl-sn-glycero-3-phospho-(1'-sn-glycerol). A run of 3 helical transmembrane segments spans residues 175–195, 204–224, and 236–256; these read PTFL…LWLF, GTLL…IEGL, and IAQV…FRLY.

Belongs to the Lgt family.

The protein localises to the cell inner membrane. It catalyses the reaction L-cysteinyl-[prolipoprotein] + a 1,2-diacyl-sn-glycero-3-phospho-(1'-sn-glycerol) = an S-1,2-diacyl-sn-glyceryl-L-cysteinyl-[prolipoprotein] + sn-glycerol 1-phosphate + H(+). Its pathway is protein modification; lipoprotein biosynthesis (diacylglyceryl transfer). In terms of biological role, catalyzes the transfer of the diacylglyceryl group from phosphatidylglycerol to the sulfhydryl group of the N-terminal cysteine of a prolipoprotein, the first step in the formation of mature lipoproteins. This chain is Phosphatidylglycerol--prolipoprotein diacylglyceryl transferase, found in Thermosynechococcus vestitus (strain NIES-2133 / IAM M-273 / BP-1).